Reading from the N-terminus, the 298-residue chain is ATP synthase gamma chain (298 aa).

The protein belongs to the ATPase gamma chain family. As to quaternary structure, F-type ATPases have 2 components, CF(1) - the catalytic core - and CF(0) - the membrane proton channel. CF(1) has five subunits: alpha(3), beta(3), gamma(1), delta(1), epsilon(1). CF(0) has three main subunits: a, b and c.

The protein resides in the cell inner membrane. Its function is as follows. Produces ATP from ADP in the presence of a proton gradient across the membrane. The gamma chain is believed to be important in regulating ATPase activity and the flow of protons through the CF(0) complex. The protein is ATP synthase gamma chain of Francisella tularensis subsp. tularensis (strain WY96-3418).